The primary structure comprises 859 residues: Heat shock protein 105 kDa (859 aa).

At serine 2 the chain carries N-acetylserine. At lysine 471 the chain carries N6-acetyllysine. 2 positions are modified to phosphoserine: serine 509 and serine 510. 2 disordered regions span residues 515 to 585 and 797 to 859; these read MDCQ…PPEA and CEPV…MDLD. The segment covering 533–555 has biased composition (polar residues); that stretch reads QQDNNEAGTQPQVQTDGHQTSQS. At serine 558 the chain carries Phosphoserine. Threonine 562 carries the phosphothreonine modification. Composition is skewed to basic and acidic residues over residues 564-585 and 806-815; these read EENK…PPEA and PKIESPKLER. Serine 810 is modified (phosphoserine). Threonine 816 bears the Phosphothreonine mark. A compositionally biased stretch (basic and acidic residues) spans 822–831; the sequence is TDKKEEDLDG. Residues 850 to 859 are compositionally biased toward polar residues; the sequence is EKSSINMDLD.

This sequence belongs to the heat shock protein 70 family. Interacts with HSPA8/HSC70. Interacts with HSPA1A (via NBD) and HSPA1B (via NBD). In terms of processing, phosphorylation on Ser-509 may be important for regulation of the HSPA8/HSC70 chaperone activity.

It is found in the cytoplasm. Its function is as follows. Acts as a nucleotide-exchange factor (NEF) for chaperone proteins HSPA1A and HSPA1B, promoting the release of ADP from HSPA1A/B thereby triggering substrate release. Prevents the aggregation of denatured proteins in cells under severe stress, on which the ATP levels decrease markedly. Inhibits HSPA8/HSC70 ATPase and chaperone activities. This Bos taurus (Bovine) protein is Heat shock protein 105 kDa (HSPH1).